A 174-amino-acid polypeptide reads, in one-letter code: UPF0316 protein lmo1776 (174 aa).

3 consecutive transmembrane segments (helical) span residues 4-24, 36-56, and 62-82; these read GIFI…IYTV, LAAL…SLVL, and IANV…GMKI.

It belongs to the UPF0316 family.

The protein localises to the cell membrane. This Listeria monocytogenes serovar 1/2a (strain ATCC BAA-679 / EGD-e) protein is UPF0316 protein lmo1776.